The following is a 222-amino-acid chain: Charged multivesicular body protein 4b (222 aa).

Disordered regions lie at residues 1-21 (MSLI…PSPQ) and 183-222 (GPET…WATA). Positions 21–182 (QEAIQKLRDT…ELDKNLLEVQ (162 aa)) form a coiled coil. A compositionally biased stretch (low complexity) spans 188-200 (PLPNVPAAVLPAK).

The protein belongs to the SNF7 family. As to quaternary structure, probable core component of the endosomal sorting required for transport complex III (ESCRT-III). ESCRT-III components are thought to multimerize to form a flat lattice on the perimeter membrane of the endosome.

It is found in the cytoplasm. Its subcellular location is the cytosol. The protein localises to the late endosome membrane. The protein resides in the midbody. Probable core component of the endosomal sorting required for transport complex III (ESCRT-III) which is involved in multivesicular bodies (MVBs) formation and sorting of endosomal cargo proteins into MVBs. MVBs contain intraluminal vesicles (ILVs) that are generated by invagination and scission from the limiting membrane of the endosome and mostly are delivered to lysosomes enabling degradation of membrane proteins, such as stimulated growth factor receptors, lysosomal enzymes and lipids. This Xenopus tropicalis (Western clawed frog) protein is Charged multivesicular body protein 4b (chmp4b).